Reading from the N-terminus, the 109-residue chain is uncharacterized protein (109 aa).

A coiled-coil region spans residues 27–89 (KEEAHQFRDK…LKRIDELIAV (63 aa)).

This is an uncharacterized protein from Streptococcus pneumoniae.